Reading from the N-terminus, the 500-residue chain is NAD(P)H-quinone oxidoreductase chain 4, chloroplastic (500 aa).

The next 14 helical transmembrane spans lie at 4–24 (FPWL…ILFL), 37–57 (LCIC…HFQL), 84–104 (GISI…TLAA), 111–129 (SRVF…IGPF), 134–154 (LLLF…LLSM), 167–187 (FILY…GICL), 208–228 (ALEM…SPII), 242–262 (HYST…YGLV), 272–292 (AHSI…IYAA), 305–325 (IAYS…SIND), 330–350 (GAIL…FLAG), 386–406 (LALP…GILT), 416–436 (ILIT…SLSM), and 462–482 (FFVS…PDFV).

This sequence belongs to the complex I subunit 4 family.

The protein resides in the plastid. Its subcellular location is the chloroplast thylakoid membrane. The enzyme catalyses a plastoquinone + NADH + (n+1) H(+)(in) = a plastoquinol + NAD(+) + n H(+)(out). It carries out the reaction a plastoquinone + NADPH + (n+1) H(+)(in) = a plastoquinol + NADP(+) + n H(+)(out). In Morus indica (Mulberry), this protein is NAD(P)H-quinone oxidoreductase chain 4, chloroplastic.